The primary structure comprises 154 residues: Cathelicidin-2 (154 aa).

The signal sequence occupies residues methionine 1 to alanine 17. A propeptide spanning residues leucine 18–valine 122 is cleaved from the precursor. Cystine bridges form between cysteine 75–cysteine 86 and cysteine 97–cysteine 114.

This sequence belongs to the cathelicidin family. Detected in trachea, lung, proventriculus, duodenum, jejunum, ileum, caeca, colon, caecal tonsil, bursa of Fabricius, kidney, ovary, testis, thymus, liver, spleen, bone marrow, skin, uropygial gland, muscle and brain.

The protein resides in the secreted. Its function is as follows. Binds bacterial lipopolysaccharide (LPS). Has potent antimicrobial activity against Gram-positive and Gram-negative bacteria (in vitro). Has hemolytic activity (in vitro). May play a role in the innate immune response. The polypeptide is Cathelicidin-2 (CATHL2) (Gallus gallus (Chicken)).